We begin with the raw amino-acid sequence, 606 residues long: Gamma-aminobutyric acid receptor subunit beta (606 aa).

An N-terminal signal peptide occupies residues 1–44 (MSDSKMDKLARMAPLPRTPLLTIWLAINMALIAQETGHKRIHTV). The Extracellular portion of the chain corresponds to 45–268 (QAATGGGSML…CEIQFVRSMG (224 aa)). Asn-58 carries an N-linked (GlcNAc...) asparagine glycan. Cysteines 185 and 199 form a disulfide. Asn-253 is a glycosylation site (N-linked (GlcNAc...) asparagine). The next 3 helical transmembrane spans lie at 269–291 (YYLIQIYIPSGLIVVISWVSFWL), 297–316 (PARVALGVTTVLTMTTLMSS), and 333–356 (YLGTCFVMVFASLLEYATVGYMAK). The Cytoplasmic portion of the chain corresponds to 357 to 568 (RIQMRKQRFM…LGITPSDIDK (212 aa)). 2 disordered regions span residues 376–451 (KQQL…VSNR) and 482–542 (HDPK…AAVP). Positions 381-395 (GANQQQANPNPNANV) are enriched in low complexity. The segment covering 396 to 425 (GGPGGVGVGPGGPGGPGGGVNVGVGMGMGP) has biased composition (gly residues). Residues 430 to 443 (GHGHHAHSHGHPHA) show a composition bias toward basic residues. A compositionally biased stretch (gly residues) spans 499–536 (GGRGGPQSHGPGPGQGGGPPGGGGGGGGGGGPPEGGGD). Residues 569-590 (YSRIVFPVCFVCFNLMYWIIYL) form a helical membrane-spanning segment.

It belongs to the ligand-gated ion channel (TC 1.A.9) family. Gamma-aminobutyric acid receptor (TC 1.A.9.5) subfamily.

It localises to the postsynaptic cell membrane. The protein resides in the cell membrane. Its function is as follows. GABA, an inhibitory neurotransmitter, mediates neuronal inhibition by binding to the GABA receptor and opening an integral chloride channel. In Drosophila simulans (Fruit fly), this protein is Gamma-aminobutyric acid receptor subunit beta (Rdl).